We begin with the raw amino-acid sequence, 182 residues long: Large ribosomal subunit protein uL6 (182 aa).

Belongs to the universal ribosomal protein uL6 family. As to quaternary structure, part of the 50S ribosomal subunit.

In terms of biological role, this protein binds to the 23S rRNA, and is important in its secondary structure. It is located near the subunit interface in the base of the L7/L12 stalk, and near the tRNA binding site of the peptidyltransferase center. This is Large ribosomal subunit protein uL6 from Desulforamulus reducens (strain ATCC BAA-1160 / DSM 100696 / MI-1) (Desulfotomaculum reducens).